A 920-amino-acid chain; its full sequence is B3 domain-containing protein REM17 (920 aa).

3 consecutive DNA-binding regions (TF-B3) follow at residues 12–105 (NPHF…LGPS), 153–250 (RFVA…CRAK), and 267–361 (CFEG…LCPT). Disordered regions lie at residues 405–438 (DDDQ…SSFV), 540–562 (LACS…KNTS), and 585–614 (DDDQ…SSDH). The segment covering 423–432 (NPREKVESSS) has biased composition (basic and acidic residues). The segment at residues 436–531 (SFVGSVNPSS…NKPVLSLCPT (96 aa)) is a DNA-binding region (TF-B3 4). DNA-binding regions (TF-B3) lie at residues 616–714 (SFVA…SLSE) and 727–823 (YFVG…LCPA). Residues 842–852 (NSLSSNPSSGD) show a composition bias toward low complexity. Residues 842 to 870 (NSLSSNPSSGDDSSRSEESEEENMEDKNI) form a disordered region.

It localises to the nucleus. The sequence is that of B3 domain-containing protein REM17 (REM17) from Arabidopsis thaliana (Mouse-ear cress).